The chain runs to 131 residues: Small ribosomal subunit protein uS11 (131 aa).

Belongs to the universal ribosomal protein uS11 family. Part of the 30S ribosomal subunit. Interacts with proteins S7 and S18. Binds to IF-3.

In terms of biological role, located on the platform of the 30S subunit, it bridges several disparate RNA helices of the 16S rRNA. Forms part of the Shine-Dalgarno cleft in the 70S ribosome. The protein is Small ribosomal subunit protein uS11 of Granulibacter bethesdensis (strain ATCC BAA-1260 / CGDNIH1).